The following is an 870-amino-acid chain: Ubiquitin-protein ligase E3A (870 aa).

Phosphoserine is present on serine 8. Residues 42–81 (CGNEACTNEFCASCPTFLRMDNNAAAIKALELYKINAKLC) form a C4-type; atypical zinc finger. Residues 171 to 180 (EELKSLQEKD) show a composition bias toward basic and acidic residues. Residues 171 to 223 (EELKSLQEKDEDKDEDEKEKAACSAAAMEEDSEASSSRMGDSSQGDNNVQKLG) are disordered. Polar residues predominate over residues 208–220 (RMGDSSQGDNNVQ). Serine 213 carries the phosphoserine modification. In terms of domain architecture, HECT spans 542 to 870 (NPADLKKQLY…ITYAKGFGML (329 aa)). Phosphotyrosine; by ABL1 is present on tyrosine 654. The active-site Glycyl thioester intermediate is the cysteine 838.

The active form is probably a homotrimer. Binds UBQLN1 and UBQLN2. Interacts with the 26S proteasome. Interacts with BPY2. Interacts with HIF1AN, MAPK6 and NEURL4; interaction with MAPK6 may be mediated by NEURL4. Interacts with the proteasomal subunit PSMD4. Interacts with BMAL1. Interacts with ARC. Interacts with ESR1 and WBP2. In terms of processing, phosphorylation at Tyr-654 by ABL1 impairs E3 ligase activity. In terms of tissue distribution, widely expressed. Most abundant in brain, heart and thymus.

It is found in the cytoplasm. It localises to the nucleus. It carries out the reaction S-ubiquitinyl-[E2 ubiquitin-conjugating enzyme]-L-cysteine + [acceptor protein]-L-lysine = [E2 ubiquitin-conjugating enzyme]-L-cysteine + N(6)-ubiquitinyl-[acceptor protein]-L-lysine.. It functions in the pathway protein modification; protein ubiquitination. E3 ubiquitin-protein ligase which accepts ubiquitin from an E2 ubiquitin-conjugating enzyme in the form of a thioester and transfers it to its substrates. Several substrates have been identified including the BMAL1, ARC, LAMTOR1, RAD23A and RAD23B, MCM7 (which is involved in DNA replication), annexin A1, the PML tumor suppressor, and the cell cycle regulator CDKN1B. Additionally, may function as a cellular quality control ubiquitin ligase by helping the degradation of the cytoplasmic misfolded proteins. Finally, UBE3A also promotes its own degradation in vivo. Plays an important role in the regulation of the circadian clock: involved in the ubiquitination of the core clock component BMAL1, leading to its proteasomal degradation. Acts as a regulator of synaptic development by mediating ubiquitination and degradation of ARC. Required for synaptic remodeling in neurons by mediating ubiquitination and degradation of LAMTOR1, thereby limiting mTORC1 signaling and activity-dependent synaptic remodeling. Synergizes with WBP2 in enhancing PGR activity. The polypeptide is Ubiquitin-protein ligase E3A (Mus musculus (Mouse)).